The primary structure comprises 525 residues: G-protein regulator 1 (525 aa).

Positions 424 to 445 (PVDMMDLIFSMSSRMDDQRTEL) constitute a GoLoco domain. The tract at residues 488–525 (HTMNRILKRSKKSKSSLDSTNSMQGDDTRSDDVTMTSK) is disordered.

In terms of assembly, interacts with gpr-1, lin-5 and GDP-bound goa-1.

The protein resides in the cytoplasm. It localises to the cell cortex. The protein localises to the cytoskeleton. It is found in the spindle. Functionally, in the 1-cell embryo, probably together with gpr-2, controls nuclear rotation and spindle elongation during mitosis. Complex of gpr-1 and gpr-2, in association with lin-5, activates G-protein signaling to affect mitotic spindle force. Polarity determinants (par genes) may regulate lin-5/gpr-1/gpr-2/goa-1 locally to create the asymmetric forces that drive spindle movement. In Caenorhabditis elegans, this protein is G-protein regulator 1 (gpr-1).